The following is a 228-amino-acid chain: Glutamate transport system permease protein GluC (228 aa).

The next 5 helical transmembrane spans lie at 16-36 (FWVTIKLTIYSAIGAMIFGTI), 64-84 (LTLVVLFCSFGLYQNLGLTLA), 100-120 (AVLGFILYTSTFVAESLRSGI), 145-165 (IIFPQAVRAAIVPLGNTLIAL), and 195-215 (LFVVFAIFAVGFMILTLPMGL). The ABC transmembrane type-1 domain maps to 16–217 (FWVTIKLTIY…ILTLPMGLGL (202 aa)).

It belongs to the binding-protein-dependent transport system permease family. HisMQ subfamily. In terms of assembly, the complex is composed of two ATP-binding proteins (GluA), two transmembrane proteins (GluC and GluD) and a solute-binding protein (GluB).

The protein resides in the cell membrane. In terms of biological role, part of the ABC transporter complex GluABCD involved in glutamate uptake. Probably responsible for the translocation of the substrate across the membrane. The sequence is that of Glutamate transport system permease protein GluC from Corynebacterium glutamicum (strain ATCC 13032 / DSM 20300 / JCM 1318 / BCRC 11384 / CCUG 27702 / LMG 3730 / NBRC 12168 / NCIMB 10025 / NRRL B-2784 / 534).